Consider the following 206-residue polypeptide: VEL1-related protein YOR387C (206 aa).

The N-terminal stretch at M1 to A19 is a signal peptide. N26, N48, N91, N139, N152, and N183 each carry an N-linked (GlcNAc...) asparagine glycan.

Belongs to the VEL1 family. N-glycosylated.

The protein resides in the cytoplasm. It is found in the cytosol. This chain is VEL1-related protein YOR387C, found in Saccharomyces cerevisiae (strain ATCC 204508 / S288c) (Baker's yeast).